The primary structure comprises 721 residues: MEGQNKSITFDGREIRLTTGLYAPQANGSVMIECGDTSLLVTATKTTKKEVADFLPLICDYEEKLYAAGRIPGGFMRREGRPPERATLISRLIDRPMRPLFPSWMRDEIQIVASCLSLDERVPADVLAVTGASIATLLGEIPFHGPMAAVRVGLIGDDFILNPSYREIEKGDLDIVVAGSPDGIVMIEAGANQLSEQDTIEAIDFGYESVTELIKSQVDLLKDLGIKQVKSSAPEEDNTLPSYLEKNCTKGIELVLKKFDQSKDERDLELEKIKVDTQAKIESLKDDNELKVLLSENDKLLSSDFKKLTKKLMRSQIINDGKRVDGRELDEVRKISASAGILPKRVHGSALFQRGLTQVLSTTTLGTPSDAQEMDDLNPSTEKTYLHHYNFPPFSVGETRPMRTPGRREIGHGALAERAIIPVLPGKETFPYVLRVVSEVLSSNGSTSMGSVCGSTLSLLDAGVPLKALVSGTAMGLIKEGKEIRILTDIQGIEDFLGDMDFKVAGTEKGITALQMDMKITGLSVSVISDAIKKARPARLHILEKMQEAIDKPQESLSPHAPRLLSFRIDPELIGTVIGPGGRTIKGITERTNTKIDIEDGGIVTIASHDGAAAEEAQKIIEGLTRKVHEGEIFTGVVTRIIPIGAFVEILPGKEGMVHISQLSEARVERVEDVVRQGDEVTVRVREIDSRGRINLTLRGVSQNSGMSYPEPTPTPVAPLN.

Residues Asp495 and Asp501 each contribute to the Mg(2+) site. Residues Pro562–Ile621 form the KH domain. The region spanning Gly631 to Arg699 is the S1 motif domain. The tract at residues Ser702–Asn721 is disordered. Pro residues predominate over residues Glu711–Asn721.

Belongs to the polyribonucleotide nucleotidyltransferase family. Mg(2+) is required as a cofactor.

Its subcellular location is the cytoplasm. The catalysed reaction is RNA(n+1) + phosphate = RNA(n) + a ribonucleoside 5'-diphosphate. Involved in mRNA degradation. Catalyzes the phosphorolysis of single-stranded polyribonucleotides processively in the 3'- to 5'-direction. This chain is Polyribonucleotide nucleotidyltransferase, found in Prochlorococcus marinus (strain MIT 9312).